Reading from the N-terminus, the 570-residue chain is Sulfite reductase [NADPH] hemoprotein beta-component (570 aa).

Residues C434, C440, C479, and C483 each coordinate [4Fe-4S] cluster. Siroheme is bound at residue C483.

This sequence belongs to the nitrite and sulfite reductase 4Fe-4S domain family. In terms of assembly, alpha(8)-beta(8). The alpha component is a flavoprotein, the beta component is a hemoprotein. Requires siroheme as cofactor. The cofactor is [4Fe-4S] cluster.

The catalysed reaction is hydrogen sulfide + 3 NADP(+) + 3 H2O = sulfite + 3 NADPH + 4 H(+). It functions in the pathway sulfur metabolism; hydrogen sulfide biosynthesis; hydrogen sulfide from sulfite (NADPH route): step 1/1. Component of the sulfite reductase complex that catalyzes the 6-electron reduction of sulfite to sulfide. This is one of several activities required for the biosynthesis of L-cysteine from sulfate. This chain is Sulfite reductase [NADPH] hemoprotein beta-component, found in Salmonella agona (strain SL483).